A 141-amino-acid polypeptide reads, in one-letter code: Regulator of ribonuclease activity B (141 aa).

A disordered region spans residues 112–141 (GTYFEDPNAPDDEDDNDDLFPPEEDEPRLH). Residues 119-141 (NAPDDEDDNDDLFPPEEDEPRLH) show a composition bias toward acidic residues.

This sequence belongs to the RraB family. Interacts with the C-terminal region of Rne.

The protein resides in the cytoplasm. Functionally, globally modulates RNA abundance by binding to RNase E (Rne) and regulating its endonucleolytic activity. Can modulate Rne action in a substrate-dependent manner by altering the composition of the degradosome. This chain is Regulator of ribonuclease activity B, found in Xenorhabdus nematophila (strain ATCC 19061 / DSM 3370 / CCUG 14189 / LMG 1036 / NCIMB 9965 / AN6).